The primary structure comprises 607 residues: V-type proton ATPase catalytic subunit A (607 aa).

246 to 253 (GAFGCGKT) serves as a coordination point for ATP.

It belongs to the ATPase alpha/beta chains family. V-ATPase is a heteromultimeric enzyme composed of a peripheral catalytic V1 complex (components A to H) attached to an integral membrane V0 proton pore complex (components: a, c, c', c'', d, e, f and VOA1).

It is found in the vacuole membrane. It carries out the reaction ATP + H2O + 4 H(+)(in) = ADP + phosphate + 5 H(+)(out). Catalytic subunit of the V1 complex of vacuolar(H+)-ATPase (V-ATPase), a multisubunit enzyme composed of a peripheral complex (V1) that hydrolyzes ATP and a membrane integral complex (V0) that translocates protons. V-ATPase is responsible for acidifying and maintaining the pH of intracellular compartments. The protein is V-type proton ATPase catalytic subunit A (vma-1) of Neurospora crassa (strain ATCC 24698 / 74-OR23-1A / CBS 708.71 / DSM 1257 / FGSC 987).